A 398-amino-acid polypeptide reads, in one-letter code: Cytohesin-1 (398 aa).

M1 is modified (N-acetylmethionine). Positions S10–A67 form a coiled coil. One can recognise an SEC7 domain in the interval F73–N202. The PH domain occupies N260–S377. A 1,2-diacyl-sn-glycero-3-phospho-(1D-myo-inositol-3,4,5-trisphosphate) is bound by residues K269 to T277, R281, Y292, R302, and N351. The segment at R388–K396 is C-terminal autoinhibitory region.

As to quaternary structure, interacts with TRIM23 and CYTIP. Interacts (via coiled-coil domain) with FRMD4A (via coiled-coil domain). Interacts with FRMD4B. Found in a complex with PARD3, CYTH1 and FRMD4A. Interacts (via N-terminal domain) with INAVA (via N-terminal domain). Ubiquitinated by SCF(FBXW11) E3 ubiquitin-protein ligase complex. Ubiquitination induces proteasomal degradation.

It localises to the cell membrane. The protein localises to the cytoplasm. The protein resides in the cytosol. Its subcellular location is the cell junction. It is found in the tight junction. It localises to the adherens junction. Promotes guanine-nucleotide exchange on ARF1, ARF5 and ARF6. Promotes the activation of ARF factors through replacement of GDP with GTP. Plays an important role in membrane trafficking, during junctional remodeling and epithelial polarization, through regulation of ARF6 activity. In Chlorocebus aethiops (Green monkey), this protein is Cytohesin-1 (CYTH1).